The following is a 273-amino-acid chain: WIMGHMVNAIGQIDEFVNLGANSIETDVSFDSNANPEYTYHGIPCDCGRNCKKWENFNDFLKGLRSATTPGDSKYKEKLVLVVFDLKTGSLYDNQANDAGKKLAKNLLQHYWNNGNNGGRAYIVLSIPDLNHYPLIKGFTDTLKQEGHPELLDKLGYDFSGNDAIGDVANACKKAGVSGHVWQSDGITNCLLRGLTRVREAVANRDSGKGYINKVYYWTVDKRASTRDALDAGVDGIMTNYPDVITDVLNEAAYKSKFRVATYDDNPWETFKK.

The active site involves H5. E25 and D27 together coordinate Mg(2+). H41 serves as the catalytic Nucleophile. Intrachain disulfides connect C45–C51 and C47–C190. Mg(2+) is bound at residue D85.

The protein belongs to the arthropod phospholipase D family. Class II subfamily. Mg(2+) serves as cofactor. In terms of tissue distribution, expressed by the venom gland.

The protein resides in the secreted. The enzyme catalyses an N-(acyl)-sphingosylphosphocholine = an N-(acyl)-sphingosyl-1,3-cyclic phosphate + choline. The catalysed reaction is an N-(acyl)-sphingosylphosphoethanolamine = an N-(acyl)-sphingosyl-1,3-cyclic phosphate + ethanolamine. It catalyses the reaction a 1-acyl-sn-glycero-3-phosphocholine = a 1-acyl-sn-glycero-2,3-cyclic phosphate + choline. It carries out the reaction a 1-acyl-sn-glycero-3-phosphoethanolamine = a 1-acyl-sn-glycero-2,3-cyclic phosphate + ethanolamine. In terms of biological role, dermonecrotic toxins cleave the phosphodiester linkage between the phosphate and headgroup of certain phospholipids (sphingolipid and lysolipid substrates), forming an alcohol (often choline) and a cyclic phosphate. This toxin acts on sphingomyelin (SM). It may also act on ceramide phosphoethanolamine (CPE), lysophosphatidylcholine (LPC) and lysophosphatidylethanolamine (LPE), but not on lysophosphatidylserine (LPS), and lysophosphatidylglycerol (LPG). It acts by transphosphatidylation, releasing exclusively cyclic phosphate products as second products. Induces dermonecrosis, hemolysis, increased vascular permeability, edema, inflammatory response, and platelet aggregation. In Loxosceles spadicea (Recluse spider), this protein is Dermonecrotic toxin LspaSicTox-alphaIA1ii.